The sequence spans 640 residues: Biosynthetic arginine decarboxylase (640 aa).

An N6-(pyridoxal phosphate)lysine modification is found at lysine 105. Substrate is bound at residue 290 to 300; it reads FDVGGGLAVDY.

It belongs to the Orn/Lys/Arg decarboxylase class-II family. SpeA subfamily. Requires Mg(2+) as cofactor. The cofactor is pyridoxal 5'-phosphate.

It carries out the reaction L-arginine + H(+) = agmatine + CO2. In terms of biological role, catalyzes the biosynthesis of agmatine from arginine. This chain is Biosynthetic arginine decarboxylase, found in Vibrio cholerae serotype O1 (strain ATCC 39315 / El Tor Inaba N16961).